The sequence spans 324 residues: Phosphate transport system permease protein PstC 2 (324 aa).

6 helical membrane-spanning segments follow: residues 30-50, 90-110, 125-145, 174-194, 237-257, and 290-310; these read ASAA…FLLV, LSSI…AVFL, MVDL…IFVL, AGGG…LPIV, VAAS…VLVI, and PLPT…TFLV. The ABC transmembrane type-1 domain maps to 85–314; that stretch reads FMVTALSSIT…VLTFLVNAAA (230 aa).

This sequence belongs to the binding-protein-dependent transport system permease family. CysTW subfamily.

It localises to the cell membrane. Functionally, part of the binding-protein-dependent transport system for phosphate; probably responsible for the translocation of the substrate across the membrane. This chain is Phosphate transport system permease protein PstC 2 (pstC2), found in Mycobacterium bovis (strain ATCC BAA-935 / AF2122/97).